Consider the following 319-residue polypeptide: MSISNPSAASEHLVSVSAPAKINLHLEVLGLRSDGFHELAMVMQSIELADQLHFRNTADGSISLRCDDSSLSTAGDNLIVRAAHLLRERSGFSDLGAAIELQKRIPIGAGLAGGSSDGAATLVGLNGLWNLNFSQGQLEGFAAELGSDMPFCLAGGSQLCFGRGERLESLQAMKASMAVVLVKDPSVSVSTPWAYGRCKELFSSRYLSKESDFEQRRQQLRESSWLNPLRADDPPPLRNDLQEVVAPEVSAVQTTLKLLTDLPGSLAVSMSGSGPSCFALFADVASAQAALQLQQPAFAAAGLSSWCCAFRCEGIKLEA.

The active site involves K21. 106 to 116 (PIGAGLAGGSS) is an ATP binding site. D148 is a catalytic residue.

It belongs to the GHMP kinase family. IspE subfamily.

It catalyses the reaction 4-CDP-2-C-methyl-D-erythritol + ATP = 4-CDP-2-C-methyl-D-erythritol 2-phosphate + ADP + H(+). The protein operates within isoprenoid biosynthesis; isopentenyl diphosphate biosynthesis via DXP pathway; isopentenyl diphosphate from 1-deoxy-D-xylulose 5-phosphate: step 3/6. Catalyzes the phosphorylation of the position 2 hydroxy group of 4-diphosphocytidyl-2C-methyl-D-erythritol. This Prochlorococcus marinus (strain MIT 9313) protein is 4-diphosphocytidyl-2-C-methyl-D-erythritol kinase.